We begin with the raw amino-acid sequence, 445 residues long: Chromosome partition protein MukF (445 aa).

The segment at 212-240 (LDETSGNLRELQDTLNAAGDKLQEQLLRI) is leucine-zipper.

The protein belongs to the MukF family. Interacts, and probably forms a ternary complex, with MukE and MukB via its C-terminal region. The complex formation is stimulated by calcium or magnesium. It is required for an interaction between MukE and MukB.

Its subcellular location is the cytoplasm. The protein resides in the nucleoid. Its function is as follows. Involved in chromosome condensation, segregation and cell cycle progression. May participate in facilitating chromosome segregation by condensation DNA from both sides of a centrally located replisome during cell division. Not required for mini-F plasmid partitioning. Probably acts via its interaction with MukB and MukE. Overexpression results in anucleate cells. It has a calcium binding activity. This Mannheimia succiniciproducens (strain KCTC 0769BP / MBEL55E) protein is Chromosome partition protein MukF.